A 216-amino-acid polypeptide reads, in one-letter code: Uracil phosphoribosyltransferase (216 aa).

5-phospho-alpha-D-ribose 1-diphosphate-binding positions include arginine 84, arginine 109, and 137 to 145 (DPMLATGNT). Uracil-binding positions include isoleucine 202 and 207-209 (GDA). Aspartate 208 is a binding site for 5-phospho-alpha-D-ribose 1-diphosphate.

This sequence belongs to the UPRTase family. The cofactor is Mg(2+).

It catalyses the reaction UMP + diphosphate = 5-phospho-alpha-D-ribose 1-diphosphate + uracil. It functions in the pathway pyrimidine metabolism; UMP biosynthesis via salvage pathway; UMP from uracil: step 1/1. Allosterically activated by GTP. In terms of biological role, catalyzes the conversion of uracil and 5-phospho-alpha-D-ribose 1-diphosphate (PRPP) to UMP and diphosphate. The sequence is that of Uracil phosphoribosyltransferase from Synechocystis sp. (strain ATCC 27184 / PCC 6803 / Kazusa).